The sequence spans 653 residues: Chaperone protein DnaK (653 aa).

T200 is modified (phosphothreonine; by autocatalysis). A disordered region spans residues 615–653 (AEAAAAGAAGAGGAGASAGGASQQQDDVVDAEFKEVKKD). A compositionally biased stretch (gly residues) spans 623-632 (AGAGGAGASA).

It belongs to the heat shock protein 70 family.

Its function is as follows. Acts as a chaperone. This chain is Chaperone protein DnaK, found in Paraburkholderia xenovorans (strain LB400).